The primary structure comprises 140 residues: Aspartate 1-decarboxylase (140 aa).

The Schiff-base intermediate with substrate; via pyruvic acid role is filled by Ser-25. Ser-25 bears the Pyruvic acid (Ser) mark. Residue Thr-57 participates in substrate binding. The active-site Proton donor is Tyr-58. Substrate is bound at residue Gly-73–Ala-75.

This sequence belongs to the PanD family. Heterooctamer of four alpha and four beta subunits. Requires pyruvate as cofactor. In terms of processing, is synthesized initially as an inactive proenzyme, which is activated by self-cleavage at a specific serine bond to produce a beta-subunit with a hydroxyl group at its C-terminus and an alpha-subunit with a pyruvoyl group at its N-terminus.

Its subcellular location is the cytoplasm. The enzyme catalyses L-aspartate + H(+) = beta-alanine + CO2. The protein operates within cofactor biosynthesis; (R)-pantothenate biosynthesis; beta-alanine from L-aspartate: step 1/1. Its function is as follows. Catalyzes the pyruvoyl-dependent decarboxylation of aspartate to produce beta-alanine. In Persephonella marina (strain DSM 14350 / EX-H1), this protein is Aspartate 1-decarboxylase.